The primary structure comprises 596 residues: ATP-dependent RNA helicase dbp3 (596 aa).

Residues 1–17 (MPKRTLEDTELNPRDNY) show a composition bias toward basic and acidic residues. 2 disordered regions span residues 1 to 87 (MPKR…ESTS) and 115 to 139 (EEKV…QNGT). Basic residues predominate over residues 21–30 (SSKKSRKEKR). The stretch at 47-120 (IDIEVESKEA…KEGKEEKVDI (74 aa)) forms a coiled coil. The segment covering 123-139 (STDSATPISVAPQQNGT) has biased composition (polar residues). Positions 180–207 (IKFDYLPITDSAQRAPFKDFKAPTPIQA) match the Q motif motif. One can recognise a Helicase ATP-binding domain in the interval 210–386 (WPFLLAGRDV…STFMTSPVKI (177 aa)). 223 to 230 (AETGSGKT) provides a ligand contact to ATP. The DEAD box signature appears at 332–335 (DEAD). In terms of domain architecture, Helicase C-terminal spans 417–566 (RLMQLLKQYQ…PVPDELLKFG (150 aa)).

This sequence belongs to the DEAD box helicase family. DDX5/DBP2 subfamily.

The protein resides in the nucleus. Its subcellular location is the nucleolus. It catalyses the reaction ATP + H2O = ADP + phosphate + H(+). In terms of biological role, ATP-dependent RNA helicase required for 60S ribosomal subunit synthesis. Involved in efficient pre-rRNA processing, predominantly at site A3, which is necessary for the normal formation of 25S and 5.8S rRNAs. This chain is ATP-dependent RNA helicase dbp3 (dbp3), found in Sclerotinia sclerotiorum (strain ATCC 18683 / 1980 / Ss-1) (White mold).